The following is a 382-amino-acid chain: Dodecanoyl-[acyl-carrier-protein] hydrolase, chloroplastic (382 aa).

The transit peptide at 1 to 83 (MATTSLASAF…FSAAEKQWTN (83 aa)) directs the protein to the chloroplast. Residues asparagine 283, histidine 285, and cysteine 320 contribute to the active site.

This sequence belongs to the acyl-ACP thioesterase family.

It localises to the plastid. The protein localises to the chloroplast. The enzyme catalyses dodecanoyl-[ACP] + H2O = dodecanoate + holo-[ACP] + H(+). Its function is as follows. Plays an essential role in chain termination during de novo fatty acid synthesis. High thioesterase activity for myristoyl-ACP. The sequence is that of Dodecanoyl-[acyl-carrier-protein] hydrolase, chloroplastic from Cinnamomum camphora (Camphor tree).